Reading from the N-terminus, the 82-residue chain is RNA-binding protein BH0128 (82 aa).

Belongs to the eukaryotic ribosomal protein eL8 family.

The protein is RNA-binding protein BH0128 of Halalkalibacterium halodurans (strain ATCC BAA-125 / DSM 18197 / FERM 7344 / JCM 9153 / C-125) (Bacillus halodurans).